Here is a 410-residue protein sequence, read N- to C-terminus: uncharacterized protein (410 aa).

Valine 11–proline 39 serves as a coordination point for NAD(+).

This sequence belongs to the lycopene cyclase family.

This is an uncharacterized protein from Deinococcus radiodurans (strain ATCC 13939 / DSM 20539 / JCM 16871 / CCUG 27074 / LMG 4051 / NBRC 15346 / NCIMB 9279 / VKM B-1422 / R1).